A 119-amino-acid polypeptide reads, in one-letter code: Protein TusC (119 aa).

The protein belongs to the DsrF/TusC family. In terms of assembly, heterohexamer, formed by a dimer of trimers. The hexameric TusBCD complex contains 2 copies each of TusB, TusC and TusD. The TusBCD complex interacts with TusE.

The protein localises to the cytoplasm. Its function is as follows. Part of a sulfur-relay system required for 2-thiolation of 5-methylaminomethyl-2-thiouridine (mnm(5)s(2)U) at tRNA wobble positions. The sequence is that of Protein TusC from Cronobacter sakazakii (strain ATCC BAA-894) (Enterobacter sakazakii).